The primary structure comprises 149 residues: MDWISIILLVLLALGVIGNNATVSIAVAILLLMRLLSLERYFPLLEQHGLQLGIIILTIGIMTPLASGKINPSSFLEIFTNWHSLLAVAVGMFVAYLAGKGTVLMSQNPLIVTGLLLGTIAGVTFFRGVAVGPLIAAGILAFILQFLPK.

The next 5 helical transmembrane spans lie at 3 to 23 (WISI…NATV), 48 to 68 (HGLQ…LASG), 85 to 105 (LLAV…TVLM), 106 to 126 (SQNP…VTFF), and 128 to 148 (GVAV…QFLP).

Belongs to the UPF0756 family.

It is found in the cell membrane. The polypeptide is UPF0756 membrane protein BBR47_32760 (Brevibacillus brevis (strain 47 / JCM 6285 / NBRC 100599)).